A 333-amino-acid polypeptide reads, in one-letter code: S-adenosylmethionine decarboxylase proenzyme (333 aa).

F7 is a binding site for substrate. Residues E8 and E11 contribute to the active site. Position 67 (E67) interacts with substrate. Catalysis depends on S68, which acts as the Schiff-base intermediate with substrate; via pyruvic acid. S68 is modified (pyruvic acid (Ser); by autocatalysis). C82 functions as the Proton donor; for catalytic activity in the catalytic mechanism. A substrate-binding site is contributed by F223. Residues S229 and H243 each act as proton acceptor; for processing activity in the active site. E247 contacts substrate. A Phosphoserine modification is found at S298.

It belongs to the eukaryotic AdoMetDC family. In terms of assembly, heterotetramer of two alpha and two beta chains. It depends on pyruvate as a cofactor. Is synthesized initially as an inactive proenzyme. Formation of the active enzyme involves a self-maturation process in which the active site pyruvoyl group is generated from an internal serine residue via an autocatalytic post-translational modification. Two non-identical subunits are generated from the proenzyme in this reaction, and the pyruvate is formed at the N-terminus of the alpha chain, which is derived from the carboxyl end of the proenzyme. The post-translation cleavage follows an unusual pathway, termed non-hydrolytic serinolysis, in which the side chain hydroxyl group of the serine supplies its oxygen atom to form the C-terminus of the beta chain, while the remainder of the serine residue undergoes an oxidative deamination to produce ammonia and the pyruvoyl group blocking the N-terminus of the alpha chain.

It carries out the reaction S-adenosyl-L-methionine + H(+) = S-adenosyl 3-(methylsulfanyl)propylamine + CO2. It functions in the pathway amine and polyamine biosynthesis; S-adenosylmethioninamine biosynthesis; S-adenosylmethioninamine from S-adenosyl-L-methionine: step 1/1. In terms of biological role, essential for biosynthesis of the polyamines spermidine and spermine. Promotes maintenance and self-renewal of embryonic stem cells, by maintaining spermine levels. The chain is S-adenosylmethionine decarboxylase proenzyme (Amd1) from Rattus norvegicus (Rat).